We begin with the raw amino-acid sequence, 432 residues long: GTPase Obg (432 aa).

The 158-residue stretch at 1-158 (MFVDQVKIYV…RNIILELKLL (158 aa)) folds into the Obg domain. Positions 159 to 329 (ADVGLVGFPS…LLFAIADLLE (171 aa)) constitute an OBG-type G domain. GTP-binding positions include 165 to 172 (GFPSVGKS), 190 to 194 (FTTLV), 212 to 215 (DLPG), 282 to 285 (NKMD), and 310 to 312 (SAA). Positions 172 and 192 each coordinate Mg(2+). One can recognise an OCT domain in the interval 350–428 (KYEKEEPPFT…LLDYEFEFVD (79 aa)).

The protein belongs to the TRAFAC class OBG-HflX-like GTPase superfamily. OBG GTPase family. As to quaternary structure, monomer. It depends on Mg(2+) as a cofactor.

The protein resides in the cytoplasm. Functionally, an essential GTPase which binds GTP, GDP and possibly (p)ppGpp with moderate affinity, with high nucleotide exchange rates and a fairly low GTP hydrolysis rate. Plays a role in control of the cell cycle, stress response, ribosome biogenesis and in those bacteria that undergo differentiation, in morphogenesis control. This chain is GTPase Obg, found in Geobacillus kaustophilus (strain HTA426).